Consider the following 133-residue polypeptide: NADPH-dependent 7-cyano-7-deazaguanine reductase (133 aa).

Cysteine 48 (thioimide intermediate) is an active-site residue. Catalysis depends on aspartate 55, which acts as the Proton donor. Substrate-binding positions include 70-72 (VEL) and 89-90 (QE).

It belongs to the GTP cyclohydrolase I family. QueF type 1 subfamily.

The protein localises to the cytoplasm. It carries out the reaction 7-aminomethyl-7-carbaguanine + 2 NADP(+) = 7-cyano-7-deazaguanine + 2 NADPH + 3 H(+). The protein operates within tRNA modification; tRNA-queuosine biosynthesis. Functionally, catalyzes the NADPH-dependent reduction of 7-cyano-7-deazaguanine (preQ0) to 7-aminomethyl-7-deazaguanine (preQ1). The sequence is that of NADPH-dependent 7-cyano-7-deazaguanine reductase from Thermoanaerobacter pseudethanolicus (strain ATCC 33223 / 39E) (Clostridium thermohydrosulfuricum).